Consider the following 138-residue polypeptide: Proline-rich protein 34 (138 aa).

Over residues 22 to 37 (SAPTSPPNPATRPAPG) the composition is skewed to pro residues. Disordered stretches follow at residues 22–55 (SAPT…PTRG) and 81–107 (APRL…SPAR).

The chain is Proline-rich protein 34 (PRR34) from Homo sapiens (Human).